The primary structure comprises 240 residues: Mitochondrial inner membrane protease ATP23 (240 aa).

His140 contributes to the a divalent metal cation binding site. Residue Glu141 is part of the active site. His144 serves as a coordination point for a divalent metal cation.

Belongs to the peptidase M76 family.

The protein resides in the mitochondrion inner membrane. Functionally, has a dual role in the assembly of mitochondrial ATPase. Acts as a protease that removes N-terminal residues of mitochondrial ATPase CF(0) subunit 6 at the intermembrane space side. Also involved in the correct assembly of the membrane-embedded ATPase CF(0) particle, probably mediating association of subunit 6 with the subunit 9 ring. The polypeptide is Mitochondrial inner membrane protease ATP23 (ATP23) (Scheffersomyces stipitis (strain ATCC 58785 / CBS 6054 / NBRC 10063 / NRRL Y-11545) (Yeast)).